We begin with the raw amino-acid sequence, 314 residues long: tRNA pseudouridine synthase B (314 aa).

D41 functions as the Nucleophile in the catalytic mechanism.

Belongs to the pseudouridine synthase TruB family. Type 1 subfamily.

The catalysed reaction is uridine(55) in tRNA = pseudouridine(55) in tRNA. In terms of biological role, responsible for synthesis of pseudouridine from uracil-55 in the psi GC loop of transfer RNAs. The polypeptide is tRNA pseudouridine synthase B (Prochlorococcus marinus (strain NATL2A)).